Consider the following 308-residue polypeptide: MARANGRSQNLRDKLDGNELDLSLSDLSEVPVRDLVAIPKATALDLSCNKLTSLPDDFCNLSYIVRLDLSKNQIAQLPSEFGRLVNLQHLDLLQNRIVALPVSFAQLKSLKWLDLKDNPLKPALAKVAGDCLDEKQCKECAQGVLQYMKSVQSDHERELQRKLQLDKDRKQRLEAQQRVKEEQDRELRKRMKQQQKERKRRDYNAMQEAQKALNNNKKKAEEEPSENHKPVPTPKEKKLARRQSRLRKIACILLFGLMVALLGVVACRFTDLKTFEVCRSVNAVYKETLSALHSNPVLERFLQDPSSQ.

Residues 1–248 (MARANGRSQN…LARRQSRLRK (248 aa)) lie on the Cytoplasmic side of the membrane. 5 LRR repeats span residues 10–31 (NLRD…SEVP), 40–61 (KATA…FCNL), 63–84 (YIVR…FGRL), 86–107 (NLQH…FAQL), and 109–128 (SLKW…AKVA). A coiled-coil region spans residues 154–223 (DHERELQRKL…NNNKKKAEEE (70 aa)). Basic and acidic residues-rich tracts occupy residues 170–187 (KQRL…DREL), 194–203 (QQKERKRRDY), and 218–237 (KKAE…PKEK). Positions 170–240 (KQRLEAQQRV…VPTPKEKKLA (71 aa)) are disordered. Residues 249–269 (IACILLFGLMVALLGVVACRF) form a helical membrane-spanning segment. The Lumenal segment spans residues 270-308 (TDLKTFEVCRSVNAVYKETLSALHSNPVLERFLQDPSSQ).

As to quaternary structure, interacts with SGO1.

Its subcellular location is the microsome membrane. The protein localises to the endoplasmic reticulum membrane. The protein resides in the nucleus envelope. Its function is as follows. Required for nuclear import of FGF1. This chain is Leucine-rich repeat-containing protein 59 (lrrc59), found in Xenopus tropicalis (Western clawed frog).